Consider the following 424-residue polypeptide: Putative histone deacetylase complex subunit cti6 (424 aa).

Disordered regions lie at residues 1-49, 117-155, 170-341, and 381-405; these read MPSN…GEVT, SKYL…TMNS, KEKS…PDGT, and AQSA…ETLR. The segment at 48–103 adopts a PHD-type zinc-finger fold; sequence VTRCVCGIVESDDEASDGGLYIQCDQCSVWQHGNCVGFADESEVPEVYYCEICHPE. Low complexity predominate over residues 127–137; sequence EASQTEESSST. Ser187 carries the phosphoserine modification. Acidic residues predominate over residues 241 to 256; that stretch reads DAPEEETVDTVEEIAD. Over residues 257–266 the composition is skewed to basic and acidic residues; it reads EEKHSVKEES. Over residues 272-287 the composition is skewed to low complexity; it reads QSSQQSTITSISTTTR. Residues 294–303 show a composition bias toward basic and acidic residues; that stretch reads REAAAEDKAD. The span at 313–324 shows a compositional bias: basic residues; the sequence is SKTRKVGGRRGK. The segment covering 392-405 has biased composition (basic and acidic residues); it reads SSKEGPEEEKETLR.

The protein localises to the cytoplasm. It localises to the nucleus. Its function is as follows. Could be a component of the RPD3C(L) histone deacetylase complex (HDAC). In Schizosaccharomyces pombe (strain 972 / ATCC 24843) (Fission yeast), this protein is Putative histone deacetylase complex subunit cti6 (cti6).